Reading from the N-terminus, the 351-residue chain is Probable dual-specificity RNA methyltransferase RlmN (351 aa).

Glu-92 (proton acceptor) is an active-site residue. A Radical SAM core domain is found at 98-332; the sequence is TDQRLTVCIS…VSLRASRGLD (235 aa). Cys-105 and Cys-337 are joined by a disulfide. [4Fe-4S] cluster is bound by residues Cys-112, Cys-116, and Cys-119. Residues 159 to 160, Ser-189, 218 to 220, and Asn-294 each bind S-adenosyl-L-methionine; these read GE and SLH. Cys-337 serves as the catalytic S-methylcysteine intermediate.

This sequence belongs to the radical SAM superfamily. RlmN family. Requires [4Fe-4S] cluster as cofactor.

The protein localises to the cytoplasm. The catalysed reaction is adenosine(2503) in 23S rRNA + 2 reduced [2Fe-2S]-[ferredoxin] + 2 S-adenosyl-L-methionine = 2-methyladenosine(2503) in 23S rRNA + 5'-deoxyadenosine + L-methionine + 2 oxidized [2Fe-2S]-[ferredoxin] + S-adenosyl-L-homocysteine. It catalyses the reaction adenosine(37) in tRNA + 2 reduced [2Fe-2S]-[ferredoxin] + 2 S-adenosyl-L-methionine = 2-methyladenosine(37) in tRNA + 5'-deoxyadenosine + L-methionine + 2 oxidized [2Fe-2S]-[ferredoxin] + S-adenosyl-L-homocysteine. Specifically methylates position 2 of adenine 2503 in 23S rRNA and position 2 of adenine 37 in tRNAs. The sequence is that of Probable dual-specificity RNA methyltransferase RlmN from Synechococcus sp. (strain CC9902).